The sequence spans 497 residues: Glycerol kinase (497 aa).

Residue Thr12 coordinates ADP. ATP-binding residues include Thr12, Thr13, and Ser14. Residue Thr12 coordinates sn-glycerol 3-phosphate. Arg16 contacts ADP. The sn-glycerol 3-phosphate site is built by Arg82, Glu83, Tyr134, and Asp243. 5 residues coordinate glycerol: Arg82, Glu83, Tyr134, Asp243, and Gln244. ADP contacts are provided by Thr265 and Gly308. ATP is bound by residues Thr265, Gly308, Gln312, and Gly409. The ADP site is built by Gly409 and Asn413.

The protein belongs to the FGGY kinase family.

The enzyme catalyses glycerol + ATP = sn-glycerol 3-phosphate + ADP + H(+). It participates in polyol metabolism; glycerol degradation via glycerol kinase pathway; sn-glycerol 3-phosphate from glycerol: step 1/1. Its activity is regulated as follows. Inhibited by fructose 1,6-bisphosphate (FBP). In terms of biological role, key enzyme in the regulation of glycerol uptake and metabolism. Catalyzes the phosphorylation of glycerol to yield sn-glycerol 3-phosphate. The chain is Glycerol kinase from Solidesulfovibrio magneticus (strain ATCC 700980 / DSM 13731 / RS-1) (Desulfovibrio magneticus).